Reading from the N-terminus, the 505-residue chain is Cytochrome P450 4Z1 (505 aa).

The Cytoplasmic portion of the chain corresponds to 1–9; it reads MEPSWLQEL. The helical; Signal-anchor for type II membrane protein transmembrane segment at 10–30 threads the bilayer; sequence MAHPFLLLILLCMSLLLFQVI. Topologically, residues 31 to 505 are lumenal; sequence RLYQRRRWMI…GIHVFAKKVC (475 aa). Cys452 contacts heme.

The protein belongs to the cytochrome P450 family. Heme is required as a cofactor. In terms of tissue distribution, preferentially detected in breast carcinoma tissue and mammary gland, whereas only marginal expression is found in all other tested tissues.

It localises to the endoplasmic reticulum membrane. The protein localises to the microsome membrane. It carries out the reaction an organic molecule + reduced [NADPH--hemoprotein reductase] + O2 = an alcohol + oxidized [NADPH--hemoprotein reductase] + H2O + H(+). The enzyme catalyses dodecanoate + reduced [NADPH--hemoprotein reductase] + O2 = 7-hydroxydodecanoate + oxidized [NADPH--hemoprotein reductase] + H2O + H(+). It catalyses the reaction dodecanoate + reduced [NADPH--hemoprotein reductase] + O2 = 8-hydroxydodecanoate + oxidized [NADPH--hemoprotein reductase] + H2O + H(+). The catalysed reaction is dodecanoate + reduced [NADPH--hemoprotein reductase] + O2 = 9-hydroxydodecanoate + oxidized [NADPH--hemoprotein reductase] + H2O + H(+). It carries out the reaction dodecanoate + reduced [NADPH--hemoprotein reductase] + O2 = 10-hydroxydodecanoate + oxidized [NADPH--hemoprotein reductase] + H2O + H(+). The enzyme catalyses dodecanoate + reduced [NADPH--hemoprotein reductase] + O2 = 11-hydroxydodecanoate + oxidized [NADPH--hemoprotein reductase] + H2O + H(+). It catalyses the reaction tetradecanoate + reduced [NADPH--hemoprotein reductase] + O2 = 9-hydroxytetradecanoate + oxidized [NADPH--hemoprotein reductase] + H2O + H(+). The catalysed reaction is tetradecanoate + reduced [NADPH--hemoprotein reductase] + O2 = 10-hydroxytetradecanoate + oxidized [NADPH--hemoprotein reductase] + H2O + H(+). It carries out the reaction tetradecanoate + reduced [NADPH--hemoprotein reductase] + O2 = 11-hydroxytetradecanoate + oxidized [NADPH--hemoprotein reductase] + H2O + H(+). The enzyme catalyses tetradecanoate + reduced [NADPH--hemoprotein reductase] + O2 = 12-hydroxytetradecanoate + oxidized [NADPH--hemoprotein reductase] + H2O + H(+). It catalyses the reaction (5Z,8Z,11Z,14Z)-eicosatetraenoate + reduced [NADPH--hemoprotein reductase] + O2 = (14S,15R)-epoxy-(5Z,8Z,11Z)-eicosatrienoate + oxidized [NADPH--hemoprotein reductase] + H2O + H(+). A cytochrome P450 monooxygenase that catalyzes the in-chain oxidation of fatty acids. Catalyzes the hydroxylation of carbon-hydrogen bonds. Hydroxylates lauric and myristic acids predominantly at the omega-4 and omega-2 positions, respectively. Catalyzes the epoxidation of double bonds of polyunsaturated fatty acids (PUFA). Displays an absolute stereoselectivity in the epoxidation of arachidonic acid producing the 14(S),15(R)-epoxyeicosatrienoic acid (EET) enantiomer. Mechanistically, uses molecular oxygen inserting one oxygen atom into a substrate, and reducing the second into a water molecule, with two electrons provided by NADPH via cytochrome P450 reductase (CPR; NADPH-ferrihemoprotein reductase). This is Cytochrome P450 4Z1 from Homo sapiens (Human).